The chain runs to 331 residues: Ketol-acid reductoisomerase (NADP(+)) (331 aa).

The 181-residue stretch at 2–182 (AQLFYDSDAD…GGTRAGILET (181 aa)) folds into the KARI N-terminal Rossmann domain. Residues 25–28 (YGSQ), serine 51, serine 53, and 83–86 (DEFQ) each bind NADP(+). The active site involves histidine 108. Glycine 134 serves as a coordination point for NADP(+). A KARI C-terminal knotted domain is found at 183 to 328 (NFKEETETDL…KGLRSMFSWL (146 aa)). 4 residues coordinate Mg(2+): aspartate 191, glutamate 195, glutamate 227, and glutamate 231. Substrate is bound at residue serine 252.

It belongs to the ketol-acid reductoisomerase family. Mg(2+) is required as a cofactor.

The catalysed reaction is (2R)-2,3-dihydroxy-3-methylbutanoate + NADP(+) = (2S)-2-acetolactate + NADPH + H(+). It carries out the reaction (2R,3R)-2,3-dihydroxy-3-methylpentanoate + NADP(+) = (S)-2-ethyl-2-hydroxy-3-oxobutanoate + NADPH + H(+). It functions in the pathway amino-acid biosynthesis; L-isoleucine biosynthesis; L-isoleucine from 2-oxobutanoate: step 2/4. The protein operates within amino-acid biosynthesis; L-valine biosynthesis; L-valine from pyruvate: step 2/4. Involved in the biosynthesis of branched-chain amino acids (BCAA). Catalyzes an alkyl-migration followed by a ketol-acid reduction of (S)-2-acetolactate (S2AL) to yield (R)-2,3-dihydroxy-isovalerate. In the isomerase reaction, S2AL is rearranged via a Mg-dependent methyl migration to produce 3-hydroxy-3-methyl-2-ketobutyrate (HMKB). In the reductase reaction, this 2-ketoacid undergoes a metal-dependent reduction by NADPH to yield (R)-2,3-dihydroxy-isovalerate. The protein is Ketol-acid reductoisomerase (NADP(+)) of Synechococcus sp. (strain CC9902).